The sequence spans 2223 residues: Sperm-associated antigen 17 (2223 aa).

2 stretches are compositionally biased toward basic and acidic residues: residues 144–172 (RENE…EKKA) and 200–212 (RRGE…RYID). The tract at residues 144–214 (RENEKKVIED…DHTNRYIDDE (71 aa)) is disordered. The stretch at 266–295 (NQQQEVLLQSEDLEAEKLKKENAIKELKTF) forms a coiled coil. 6 disordered regions span residues 387–416 (MPTS…PPPV), 680–710 (MSVQ…LNNL), 731–762 (PQHE…PKKM), 950–1015 (EERL…EPKI), 1179–1212 (GKIK…PEPV), and 1345–1378 (ETIP…PPPE). 3 stretches are compositionally biased toward basic and acidic residues: residues 743 to 756 (EIKD…DSHE), 950 to 999 (EERL…EQVK), and 1182 to 1205 (KGKE…KKEE). The stretch at 940-966 (WKEEQHRLAEEERLREEKKAEKKGKEA) forms a coiled coil. A compositionally biased stretch (polar residues) spans 1345-1354 (ETIPSEITNT). The stretch at 1874–1907 (RHTASSKRWKEKIDKTRKEIETTQNYLMDIKNRI) forms a coiled coil. Disordered stretches follow at residues 1938 to 1957 (TKKN…DLNL) and 1962 to 2008 (HKVS…SYEP). Residues 1988–1998 (TAQNQTENLTK) are compositionally biased toward polar residues.

In terms of assembly, interacts (via the C-terminus) with SPAG6; the interaction probably occurs on polymerized microtubules. Highly expressed in testis. Expressed in organs that contain cilia-bearing cells including brain, oviduct, lung, and uterus.

It localises to the cytoplasm. It is found in the cytoskeleton. The protein localises to the flagellum axoneme. Its subcellular location is the cytoplasmic vesicle. The protein resides in the secretory vesicle. It localises to the acrosome. It is found in the golgi apparatus. Functionally, component of the central pair apparatus of ciliary axonemes. Plays a critical role in the function and structure of motile cilia. May play a role in endochondral bone formation, most likely because of a function in primary cilia of chondrocytes and osteoblasts. Essential for normal spermatogenesis and male fertility. Required for normal manchette structure, transport of proteins along the manchette microtubules and formation of the sperm head and flagellum. Essential for sperm flagellum development and proper assembly of the respiratory motile cilia central pair apparatus, but not the brain ependymal cilia. The polypeptide is Sperm-associated antigen 17 (SPAG17) (Homo sapiens (Human)).